The following is a 919-amino-acid chain: Valine--tRNA ligase (919 aa).

Positions 46 to 56 (PNVTGTLHMGH) match the 'HIGH' region motif. Residues 528–532 (KMSKS) carry the 'KMSKS' region motif. Lys-531 is an ATP binding site. A coiled-coil region spans residues 849–919 (LAGLVDIEAE…KTLEKKEALG (71 aa)).

This sequence belongs to the class-I aminoacyl-tRNA synthetase family. ValS type 1 subfamily. In terms of assembly, monomer.

Its subcellular location is the cytoplasm. The enzyme catalyses tRNA(Val) + L-valine + ATP = L-valyl-tRNA(Val) + AMP + diphosphate. Catalyzes the attachment of valine to tRNA(Val). As ValRS can inadvertently accommodate and process structurally similar amino acids such as threonine, to avoid such errors, it has a 'posttransfer' editing activity that hydrolyzes mischarged Thr-tRNA(Val) in a tRNA-dependent manner. The polypeptide is Valine--tRNA ligase (Francisella tularensis subsp. tularensis (strain SCHU S4 / Schu 4)).